The following is a 136-amino-acid chain: Group 1 truncated hemoglobin GlbN (136 aa).

A heme-binding site is contributed by His81.

This sequence belongs to the truncated hemoglobin family. Group I subfamily. Homodimer. Requires heme as cofactor.

Its function is as follows. Binds oxygen cooperatively with very high affinity (P(50) = 0.013 mmHg at 20 degrees Celsius) because of a fast combination (25 microM(-1)sec(-1)) and a slow dissociation (0.2 sec(-1)) rate. In Mycobacterium bovis (strain ATCC BAA-935 / AF2122/97), this protein is Group 1 truncated hemoglobin GlbN (glbN).